The primary structure comprises 282 residues: Shikimate dehydrogenase (NADP(+)) (282 aa).

Shikimate is bound by residues 24–26 (SRS) and Thr71. The active-site Proton acceptor is the Lys75. Asp87 contributes to the NADP(+) binding site. Positions 96 and 112 each coordinate shikimate. NADP(+) is bound by residues 138–142 (GAGGA), 162–167 (NRTRIR), and Leu227. Tyr229 lines the shikimate pocket. Residue Gly250 coordinates NADP(+).

This sequence belongs to the shikimate dehydrogenase family. In terms of assembly, homodimer.

It carries out the reaction shikimate + NADP(+) = 3-dehydroshikimate + NADPH + H(+). The protein operates within metabolic intermediate biosynthesis; chorismate biosynthesis; chorismate from D-erythrose 4-phosphate and phosphoenolpyruvate: step 4/7. Functionally, involved in the biosynthesis of the chorismate, which leads to the biosynthesis of aromatic amino acids. Catalyzes the reversible NADPH linked reduction of 3-dehydroshikimate (DHSA) to yield shikimate (SA). In Paracoccus denitrificans (strain Pd 1222), this protein is Shikimate dehydrogenase (NADP(+)).